Here is a 240-residue protein sequence, read N- to C-terminus: Biosynthetic peptidoglycan transglycosylase (240 aa).

A helical membrane pass occupies residues 27-47 (VVLLFFFAVFALLLIFRFVPI).

Belongs to the glycosyltransferase 51 family.

Its subcellular location is the cell inner membrane. The enzyme catalyses [GlcNAc-(1-&gt;4)-Mur2Ac(oyl-L-Ala-gamma-D-Glu-L-Lys-D-Ala-D-Ala)](n)-di-trans,octa-cis-undecaprenyl diphosphate + beta-D-GlcNAc-(1-&gt;4)-Mur2Ac(oyl-L-Ala-gamma-D-Glu-L-Lys-D-Ala-D-Ala)-di-trans,octa-cis-undecaprenyl diphosphate = [GlcNAc-(1-&gt;4)-Mur2Ac(oyl-L-Ala-gamma-D-Glu-L-Lys-D-Ala-D-Ala)](n+1)-di-trans,octa-cis-undecaprenyl diphosphate + di-trans,octa-cis-undecaprenyl diphosphate + H(+). It functions in the pathway cell wall biogenesis; peptidoglycan biosynthesis. Peptidoglycan polymerase that catalyzes glycan chain elongation from lipid-linked precursors. In Haemophilus influenzae (strain PittEE), this protein is Biosynthetic peptidoglycan transglycosylase.